A 172-amino-acid polypeptide reads, in one-letter code: 6,7-dimethyl-8-ribityllumazine synthase (172 aa).

5-amino-6-(D-ribitylamino)uracil contacts are provided by residues F24, A58 to E60, and A82 to I84. A (2S)-2-hydroxy-3-oxobutyl phosphate-binding site is contributed by E87–T88. Catalysis depends on H90, which acts as the Proton donor. A 5-amino-6-(D-ribitylamino)uracil-binding site is contributed by N115. Position 129 (R129) interacts with (2S)-2-hydroxy-3-oxobutyl phosphate. The disordered stretch occupies residues A150 to A172. Over residues L154–A172 the composition is skewed to acidic residues.

The protein belongs to the DMRL synthase family.

It catalyses the reaction (2S)-2-hydroxy-3-oxobutyl phosphate + 5-amino-6-(D-ribitylamino)uracil = 6,7-dimethyl-8-(1-D-ribityl)lumazine + phosphate + 2 H2O + H(+). Its pathway is cofactor biosynthesis; riboflavin biosynthesis; riboflavin from 2-hydroxy-3-oxobutyl phosphate and 5-amino-6-(D-ribitylamino)uracil: step 1/2. Functionally, catalyzes the formation of 6,7-dimethyl-8-ribityllumazine by condensation of 5-amino-6-(D-ribitylamino)uracil with 3,4-dihydroxy-2-butanone 4-phosphate. This is the penultimate step in the biosynthesis of riboflavin. The chain is 6,7-dimethyl-8-ribityllumazine synthase from Paraburkholderia phymatum (strain DSM 17167 / CIP 108236 / LMG 21445 / STM815) (Burkholderia phymatum).